A 113-amino-acid chain; its full sequence is Hydrogenase maturation factor HypA (113 aa).

Residue His-2 participates in Ni(2+) binding. Zn(2+) is bound by residues Cys-73, Cys-76, Cys-89, and Cys-92.

Belongs to the HypA/HybF family.

Functionally, involved in the maturation of [NiFe] hydrogenases. Required for nickel insertion into the metal center of the hydrogenase. In Rhizobium leguminosarum bv. viciae, this protein is Hydrogenase maturation factor HypA.